The sequence spans 194 residues: MIGRITGLLLEKHPPLVLVDVQGTGYEIDVPMSTFCKLPDIGKKVTLHTHFWVREDVHLLFGFMTEQERALFRQLTKISGIGARTGLAILSGLSVTDLHQAVVSQDSIRLTKIPGIGKKTAERLLLELRDKIDPVAILSEAGAAASNVDKDILSALLALGYNGREVNRALEQLSEGVTVSDGIMQSLKFLSKVK.

A domain I region spans residues 1 to 64; that stretch reads MIGRITGLLL…EDVHLLFGFM (64 aa). Residues 65–140 form a domain II region; sequence TEQERALFRQ…KIDPVAILSE (76 aa). The tract at residues 140-143 is flexible linker; sequence EAGA. Residues 144–194 are domain III; the sequence is AASNVDKDILSALLALGYNGREVNRALEQLSEGVTVSDGIMQSLKFLSKVK.

The protein belongs to the RuvA family. In terms of assembly, homotetramer. Forms an RuvA(8)-RuvB(12)-Holliday junction (HJ) complex. HJ DNA is sandwiched between 2 RuvA tetramers; dsDNA enters through RuvA and exits via RuvB. An RuvB hexamer assembles on each DNA strand where it exits the tetramer. Each RuvB hexamer is contacted by two RuvA subunits (via domain III) on 2 adjacent RuvB subunits; this complex drives branch migration. In the full resolvosome a probable DNA-RuvA(4)-RuvB(12)-RuvC(2) complex forms which resolves the HJ.

The protein resides in the cytoplasm. Its function is as follows. The RuvA-RuvB-RuvC complex processes Holliday junction (HJ) DNA during genetic recombination and DNA repair, while the RuvA-RuvB complex plays an important role in the rescue of blocked DNA replication forks via replication fork reversal (RFR). RuvA specifically binds to HJ cruciform DNA, conferring on it an open structure. The RuvB hexamer acts as an ATP-dependent pump, pulling dsDNA into and through the RuvAB complex. HJ branch migration allows RuvC to scan DNA until it finds its consensus sequence, where it cleaves and resolves the cruciform DNA. This Nitrosomonas eutropha (strain DSM 101675 / C91 / Nm57) protein is Holliday junction branch migration complex subunit RuvA.